Consider the following 145-residue polypeptide: Immune protein Tsi4 (145 aa).

2 helical membrane-spanning segments follow: residues 9–29 (IGGLLHASLFSLLGLGLLLAG) and 109–129 (ALWGTGAFLCGFGALFGIVGF).

The protein resides in the membrane. Immunity protein that plays a role in preventing early activation of toxin Tse4. In Pseudomonas aeruginosa (strain ATCC 15692 / DSM 22644 / CIP 104116 / JCM 14847 / LMG 12228 / 1C / PRS 101 / PAO1), this protein is Immune protein Tsi4.